We begin with the raw amino-acid sequence, 169 residues long: Putative lipocalin R877 (169 aa).

An N-terminal signal peptide occupies residues 1–18 (MWIIILIVIIVIITIIFS).

This sequence belongs to the calycin superfamily. Lipocalin family.

It is found in the secreted. The protein localises to the virion. Its function is as follows. Could play a role in the transport of a small ligand. The protein is Putative lipocalin R877 of Acanthamoeba polyphaga mimivirus (APMV).